Reading from the N-terminus, the 68-residue chain is ATP synthase F(0) complex subunit 8 (68 aa).

A helical transmembrane segment spans residues 8–24 (VWPTMIAPMLLTLFLIT). An N6-acetyllysine; alternate modification is found at K54. Residue K54 is modified to N6-succinyllysine; alternate. K57 is subject to N6-acetyllysine.

Belongs to the ATPase protein 8 family. Component of the ATP synthase complex composed at least of ATP5F1A/subunit alpha, ATP5F1B/subunit beta, ATP5MC1/subunit c (homooctomer), MT-ATP6/subunit a, MT-ATP8/subunit 8, ATP5ME/subunit e, ATP5MF/subunit f, ATP5MG/subunit g, ATP5MK/subunit k, ATP5MJ/subunit j, ATP5F1C/subunit gamma, ATP5F1D/subunit delta, ATP5F1E/subunit epsilon, ATP5PF/subunit F6, ATP5PB/subunit b, ATP5PD/subunit d, ATP5PO/subunit OSCP. ATP synthase complex consists of a soluble F(1) head domain (subunits alpha(3) and beta(3)) - the catalytic core - and a membrane F(0) domain - the membrane proton channel (subunits c, a, 8, e, f, g, k and j). These two domains are linked by a central stalk (subunits gamma, delta, and epsilon) rotating inside the F1 region and a stationary peripheral stalk (subunits F6, b, d, and OSCP). Interacts with PRICKLE3.

Its subcellular location is the mitochondrion membrane. Its function is as follows. Subunit 8, of the mitochondrial membrane ATP synthase complex (F(1)F(0) ATP synthase or Complex V) that produces ATP from ADP in the presence of a proton gradient across the membrane which is generated by electron transport complexes of the respiratory chain. ATP synthase complex consist of a soluble F(1) head domain - the catalytic core - and a membrane F(1) domain - the membrane proton channel. These two domains are linked by a central stalk rotating inside the F(1) region and a stationary peripheral stalk. During catalysis, ATP synthesis in the catalytic domain of F(1) is coupled via a rotary mechanism of the central stalk subunits to proton translocation. In vivo, can only synthesize ATP although its ATP hydrolase activity can be activated artificially in vitro. Part of the complex F(0) domain. In Gorilla gorilla gorilla (Western lowland gorilla), this protein is ATP synthase F(0) complex subunit 8.